We begin with the raw amino-acid sequence, 167 residues long: Leptin (167 aa).

A signal peptide spans 1 to 21 (MHWGTLCGFLWLWPYLFYVQA). An intrachain disulfide couples cysteine 117 to cysteine 167.

This sequence belongs to the leptin family. Interacts with SIGLEC6. In terms of tissue distribution, adipose tissue is the main source of leptin. It is also produced by other peripheral tissues such as the skeletal muscle. Expressed by intercalated and striated tracts of submandibular and parotid salivary gland intralobular ducts. Detected by fundic epithelium of the gastric mucosa. Secreted into blood and gastric juice.

The protein resides in the secreted. In terms of biological role, key player in the regulation of energy balance and body weight control. Once released into the circulation, has central and peripheral effects by binding LEPR, found in many tissues, which results in the activation of several major signaling pathways. In the hypothalamus, acts as an appetite-regulating factor that induces a decrease in food intake and an increase in energy consumption by inducing anorexinogenic factors and suppressing orexigenic neuropeptides, also regulates bone mass and secretion of hypothalamo-pituitary-adrenal hormones. In the periphery, increases basal metabolism, influences reproductive function, regulates pancreatic beta-cell function and insulin secretion, is pro-angiogenic for endothelial cell and affects innate and adaptive immunity. In the arcuate nucleus of the hypothalamus, activates by depolarization POMC neurons inducing FOS and SOCS3 expression to release anorexigenic peptides and inhibits by hyperpolarization NPY neurons inducing SOCS3 with a consequent reduction on release of orexigenic peptides. In addition to its known satiety inducing effect, has a modulatory role in nutrient absorption. In the intestine, reduces glucose absorption by enterocytes by activating PKC and leading to a sequential activation of p38, PI3K and ERK signaling pathways which exerts an inhibitory effect on glucose absorption. Acts as a growth factor on certain tissues, through the activation of different signaling pathways increases expression of genes involved in cell cycle regulation such as CCND1, via JAK2-STAT3 pathway, or VEGFA, via MAPK1/3 and PI3K-AKT1 pathways. May also play an apoptotic role via JAK2-STAT3 pathway and up-regulation of BIRC5 expression. Pro-angiogenic, has mitogenic activity on vascular endothelial cells and plays a role in matrix remodeling by regulating the expression of matrix metalloproteinases (MMPs) and tissue inhibitors of metalloproteinases (TIMPs). In innate immunity, modulates the activity and function of neutrophils by increasing chemotaxis and the secretion of oxygen radicals. Increases phagocytosis by macrophages and enhances secretion of pro-inflammatory mediators. Increases cytotoxic ability of NK cells. Plays a pro-inflammatory role, in synergy with IL1B, by inducing NOS2 which promotes the production of IL6, IL8 and Prostaglandin E2, through a signaling pathway that involves JAK2, PI3K, MAP2K1/MEK1 and MAPK14/p38. In adaptive immunity, promotes the switch of memory T-cells towards T helper-1 cell immune responses. Increases CD4(+)CD25(-) T-cell proliferation and reduces autophagy during TCR (T-cell receptor) stimulation, through MTOR signaling pathway activation and BCL2 up-regulation. This Homo sapiens (Human) protein is Leptin.